Reading from the N-terminus, the 76-residue chain is Acyl carrier protein (76 aa).

A Carrier domain is found at 1-76; sequence MSIEERVKKI…SAIDYVQNNQ (76 aa). Ser-36 carries the post-translational modification O-(pantetheine 4'-phosphoryl)serine.

The protein belongs to the acyl carrier protein (ACP) family. 4'-phosphopantetheine is transferred from CoA to a specific serine of apo-ACP by AcpS. This modification is essential for activity because fatty acids are bound in thioester linkage to the sulfhydryl of the prosthetic group.

It localises to the cytoplasm. Its pathway is lipid metabolism; fatty acid biosynthesis. In terms of biological role, carrier of the growing fatty acid chain in fatty acid biosynthesis. This chain is Acyl carrier protein, found in Haemophilus influenzae (strain 86-028NP).